A 314-amino-acid chain; its full sequence is ATP synthase gamma chain (314 aa).

This sequence belongs to the ATPase gamma chain family. As to quaternary structure, F-type ATPases have 2 components, CF(1) - the catalytic core - and CF(0) - the membrane proton channel. CF(1) has five subunits: alpha(3), beta(3), gamma(1), delta(1), epsilon(1). CF(0) has three main subunits: a, b and c.

Its subcellular location is the cell inner membrane. In terms of biological role, produces ATP from ADP in the presence of a proton gradient across the membrane. The gamma chain is believed to be important in regulating ATPase activity and the flow of protons through the CF(0) complex. In Gloeobacter violaceus (strain ATCC 29082 / PCC 7421), this protein is ATP synthase gamma chain.